A 147-amino-acid chain; its full sequence is Putative protein adenylyltransferase MJ1305 (147 aa).

Residues 32-46 (GSYARGTAVEYSDVD) carry the GSX(10)DXD motif motif. Asp44 and Asp46 together coordinate Mg(2+).

This sequence belongs to the MntA antitoxin family. Requires Mg(2+) as cofactor.

It carries out the reaction L-tyrosyl-[protein] + ATP = O-(5'-adenylyl)-L-tyrosyl-[protein] + diphosphate. The catalysed reaction is O-(5'-adenylyl)-L-tyrosyl-[protein] + ATP = O-[5'-(adenylyl-(5'-&gt;3')-adenylyl)]-L-tyrosyl-[protein] + diphosphate. Its function is as follows. Putative antitoxin component of a putative type VII toxin-antitoxin (TA) system. Its cognate toxin might be MJ1304, which it might AMPylate. This is Putative protein adenylyltransferase MJ1305 from Methanocaldococcus jannaschii (strain ATCC 43067 / DSM 2661 / JAL-1 / JCM 10045 / NBRC 100440) (Methanococcus jannaschii).